Reading from the N-terminus, the 95-residue chain is Sec-independent protein translocase protein TatA (95 aa).

A helical transmembrane segment spans residues 1–21 (MGSMSVWHWVIVAVVVMLLFG). A disordered region spans residues 42 to 95 (GMADDETQPNTATSVPPVGPNDPVRTLPHQGAPGTAPQPPHVQPHVSAGDHKAV).

This sequence belongs to the TatA/E family. The Tat system comprises two distinct complexes: a TatABC complex, containing multiple copies of TatA, TatB and TatC subunits, and a separate TatA complex, containing only TatA subunits. Substrates initially bind to the TatABC complex, which probably triggers association of the separate TatA complex to form the active translocon.

The protein localises to the cell inner membrane. Its function is as follows. Part of the twin-arginine translocation (Tat) system that transports large folded proteins containing a characteristic twin-arginine motif in their signal peptide across membranes. TatA could form the protein-conducting channel of the Tat system. The sequence is that of Sec-independent protein translocase protein TatA from Methylorubrum extorquens (strain CM4 / NCIMB 13688) (Methylobacterium extorquens).